A 390-amino-acid polypeptide reads, in one-letter code: Oxygen-dependent coproporphyrinogen-III oxidase (390 aa).

Residues 131–140 (VLQDGDVFEK) are important for dimerization. A substrate-binding site is contributed by Ser-181. Residue His-195 is the Proton donor of the active site. Substrate is bound by residues 197–199 (NYR) and 348–353 (GARYES). The segment at 329 to 365 (YVEFNLIYDRGTKFGLYTPGARYESILMSLPLHARWE) is important for dimerization.

Belongs to the aerobic coproporphyrinogen-III oxidase family. As to quaternary structure, homodimer.

The catalysed reaction is coproporphyrinogen III + O2 + 2 H(+) = protoporphyrinogen IX + 2 CO2 + 2 H2O. It functions in the pathway porphyrin-containing compound metabolism; protoporphyrin-IX biosynthesis; protoporphyrinogen-IX from coproporphyrinogen-III (O2 route): step 1/1. Functionally, involved in the heme biosynthesis. Catalyzes the aerobic oxidative decarboxylation of propionate groups of rings A and B of coproporphyrinogen-III to yield the vinyl groups in protoporphyrinogen-IX. This is Oxygen-dependent coproporphyrinogen-III oxidase (Coprox) from Drosophila melanogaster (Fruit fly).